The sequence spans 235 residues: Casparian strip membrane protein 2 (235 aa).

Residues 1–70 (MTSESATVIQ…RSGAEGFRRC (70 aa)) are Cytoplasmic-facing. The helical transmembrane segment at 71-91 (LAVIDFLLRVAAFGPTLAAAI) threads the bilayer. Topologically, residues 92–118 (STGTADERLSVFTNFFQFHARFDDFPA) are extracellular. Residues 119-139 (FTFFLVANAVAAGYLVLSLPF) traverse the membrane as a helical segment. Over 140–162 (SVVVILRPNKATGGVRLLLLLCD) the chain is Cytoplasmic. Residues 163-183 (VLIMALLTAAGAAAAAIVYVA) traverse the membrane as a helical segment. Over 184-210 (HSGNRRANWVPICMQFHGFCQRTSGSV) the chain is Extracellular. A helical membrane pass occupies residues 211 to 231 (VATFLAVLVFIVLILMAACVI). At 232-235 (RRSK) the chain is on the cytoplasmic side.

The protein belongs to the Casparian strip membrane proteins (CASP) family. Homodimer and heterodimers.

The protein resides in the cell membrane. Its function is as follows. Regulates membrane-cell wall junctions and localized cell wall deposition. Required for establishment of the Casparian strip membrane domain (CSD) and the subsequent formation of Casparian strips, a cell wall modification of the root endodermis that determines an apoplastic barrier between the intraorganismal apoplasm and the extraorganismal apoplasm and prevents lateral diffusion. The polypeptide is Casparian strip membrane protein 2 (Sorghum bicolor (Sorghum)).